A 160-amino-acid polypeptide reads, in one-letter code: Cytochrome c-type biogenesis protein CcmE (160 aa).

Over 1 to 8 the chain is Cytoplasmic; it reads MSAPRKTR. Residues 9-29 traverse the membrane as a helical; Signal-anchor for type II membrane protein segment; sequence LYAILAVVCGAVLTIALMLYA. Residues 30 to 160 are Periplasmic-facing; that stretch reads LSSNIDLFYT…PAAGPEGKRL (131 aa). Positions 130 and 134 each coordinate heme.

Belongs to the CcmE/CycJ family.

It localises to the cell inner membrane. In terms of biological role, heme chaperone required for the biogenesis of c-type cytochromes. Transiently binds heme delivered by CcmC and transfers the heme to apo-cytochromes in a process facilitated by CcmF and CcmH. The sequence is that of Cytochrome c-type biogenesis protein CcmE from Pectobacterium atrosepticum (strain SCRI 1043 / ATCC BAA-672) (Erwinia carotovora subsp. atroseptica).